Here is a 199-residue protein sequence, read N- to C-terminus: Fe/S biogenesis protein NfuA (199 aa).

[4Fe-4S] cluster-binding residues include cysteine 151 and cysteine 154.

The protein belongs to the NfuA family. As to quaternary structure, homodimer. [4Fe-4S] cluster is required as a cofactor.

Its function is as follows. Involved in iron-sulfur cluster biogenesis. Binds a 4Fe-4S cluster, can transfer this cluster to apoproteins, and thereby intervenes in the maturation of Fe/S proteins. Could also act as a scaffold/chaperone for damaged Fe/S proteins. This is Fe/S biogenesis protein NfuA from Xanthomonas campestris pv. campestris (strain 8004).